A 396-amino-acid chain; its full sequence is Acetylornithine aminotransferase 2 (396 aa).

Pyridoxal 5'-phosphate contacts are provided by residues 102 to 103 and phenylalanine 134; that span reads GA. Arginine 137 is a binding site for N(2)-acetyl-L-ornithine. Pyridoxal 5'-phosphate is bound at residue 219 to 222; that stretch reads DEVQ. Lysine 248 is subject to N6-(pyridoxal phosphate)lysine. Threonine 276 provides a ligand contact to pyridoxal 5'-phosphate.

The protein belongs to the class-III pyridoxal-phosphate-dependent aminotransferase family. ArgD subfamily. As to quaternary structure, homodimer. It depends on pyridoxal 5'-phosphate as a cofactor.

The protein resides in the cytoplasm. The enzyme catalyses N(2)-acetyl-L-ornithine + 2-oxoglutarate = N-acetyl-L-glutamate 5-semialdehyde + L-glutamate. It functions in the pathway amino-acid biosynthesis; L-arginine biosynthesis; N(2)-acetyl-L-ornithine from L-glutamate: step 4/4. The chain is Acetylornithine aminotransferase 2 from Bordetella parapertussis (strain 12822 / ATCC BAA-587 / NCTC 13253).